Consider the following 294-residue polypeptide: MGLGHSKAHPRVIKVTPLQSQETETPSTGPVFFALNRNLEEESSFTRLQDQNRTREGQLPPLRETWYGRLPAVSRAMYLDIPLKHEETSIIKRHPPRRIQKLEPIDLPQAITSERLLCHQEGRTKSNTKQENEKKIQLPMYTSGKRQYLHKMKMLEMNHKRQEAQMELRKSLLSKAMLDMQKLKDHNGNKIAQSKPRSNGYDILTILPNENINRDPGNPQDEEFLDCHTENDYYVRKIGKMETWLREQEARGQLFWDSSSSDSDELEKDERRPQALVRTKTEKIPLYDDFYDSA.

Over residues 1–12 the composition is skewed to basic residues; it reads MGLGHSKAHPRV. Disordered stretches follow at residues 1–28 and 255–279; these read MGLGHSKAHPRVIKVTPLQSQETETPST and FWDSSSSDSDELEKDERRPQALVRT. A lipid anchor (N-myristoyl glycine) is attached at glycine 2. The segment covering 17–28 has biased composition (polar residues); the sequence is PLQSQETETPST. Residues 268-279 are compositionally biased toward basic and acidic residues; sequence KDERRPQALVRT.

In terms of tissue distribution, expressed in proximal tubules of the kidney.

It localises to the cell membrane. The protein localises to the cytoplasmic vesicle. May be involved in tuning the metabolism, energy expenditure, and excretion processes. The polypeptide is Factor associated with metabolism and energy (Mus musculus (Mouse)).